A 237-amino-acid polypeptide reads, in one-letter code: Uridylate kinase (237 aa).

An ATP-binding site is contributed by Lys11–Gly14. Gly53 provides a ligand contact to UMP. Positions 54 and 58 each coordinate ATP. UMP-binding positions include Asp73 and Thr134–Thr141. Residues Thr161, Tyr167, and Asp170 each contribute to the ATP site.

The protein belongs to the UMP kinase family. In terms of assembly, homohexamer.

The protein resides in the cytoplasm. It catalyses the reaction UMP + ATP = UDP + ADP. It functions in the pathway pyrimidine metabolism; CTP biosynthesis via de novo pathway; UDP from UMP (UMPK route): step 1/1. Its activity is regulated as follows. Inhibited by UTP. Its function is as follows. Catalyzes the reversible phosphorylation of UMP to UDP. The protein is Uridylate kinase of Burkholderia cenocepacia (strain HI2424).